The following is a 156-amino-acid chain: ATP synthase subunit b (156 aa).

A helical transmembrane segment spans residues 7 to 27; that stretch reads FFAQMVVFFILWWVVAKFIWP.

Belongs to the ATPase B chain family. F-type ATPases have 2 components, F(1) - the catalytic core - and F(0) - the membrane proton channel. F(1) has five subunits: alpha(3), beta(3), gamma(1), delta(1), epsilon(1). F(0) has three main subunits: a(1), b(2) and c(10-14). The alpha and beta chains form an alternating ring which encloses part of the gamma chain. F(1) is attached to F(0) by a central stalk formed by the gamma and epsilon chains, while a peripheral stalk is formed by the delta and b chains.

The protein resides in the cell inner membrane. Its function is as follows. F(1)F(0) ATP synthase produces ATP from ADP in the presence of a proton or sodium gradient. F-type ATPases consist of two structural domains, F(1) containing the extramembraneous catalytic core and F(0) containing the membrane proton channel, linked together by a central stalk and a peripheral stalk. During catalysis, ATP synthesis in the catalytic domain of F(1) is coupled via a rotary mechanism of the central stalk subunits to proton translocation. Functionally, component of the F(0) channel, it forms part of the peripheral stalk, linking F(1) to F(0). This Cupriavidus necator (strain ATCC 17699 / DSM 428 / KCTC 22496 / NCIMB 10442 / H16 / Stanier 337) (Ralstonia eutropha) protein is ATP synthase subunit b.